We begin with the raw amino-acid sequence, 707 residues long: Lipase maturation factor 2 (707 aa).

9 helical membrane passes run F11 to P31, M78 to L98, L102 to L122, W126 to L146, F220 to F240, I256 to C276, L306 to V326, I358 to M378, and V398 to I418. N-linked (GlcNAc...) asparagine glycosylation is present at N483. Residues L634–G654 form a helical membrane-spanning segment. Positions P659 to S707 are disordered. A compositionally biased stretch (basic and acidic residues) spans D696–S707.

Belongs to the lipase maturation factor family.

It localises to the endoplasmic reticulum membrane. In terms of biological role, involved in the maturation of specific proteins in the endoplasmic reticulum. This chain is Lipase maturation factor 2 (lmf2), found in Xenopus tropicalis (Western clawed frog).